The chain runs to 494 residues: Glycerol kinase (494 aa).

ADP is bound at residue Thr-12. ATP-binding residues include Thr-12, Thr-13, and Ser-14. A sn-glycerol 3-phosphate-binding site is contributed by Thr-12. Residue Arg-16 coordinates ADP. Sn-glycerol 3-phosphate contacts are provided by Arg-82, Glu-83, Tyr-135, and Asp-244. Glycerol is bound by residues Arg-82, Glu-83, Tyr-135, Asp-244, and Gln-245. ADP-binding residues include Thr-266 and Gly-309. ATP-binding residues include Thr-266, Gly-309, Gln-313, and Gly-409. Gly-409 and Asn-413 together coordinate ADP.

This sequence belongs to the FGGY kinase family.

The catalysed reaction is glycerol + ATP = sn-glycerol 3-phosphate + ADP + H(+). It participates in polyol metabolism; glycerol degradation via glycerol kinase pathway; sn-glycerol 3-phosphate from glycerol: step 1/1. Its activity is regulated as follows. Inhibited by fructose 1,6-bisphosphate (FBP). Its function is as follows. Key enzyme in the regulation of glycerol uptake and metabolism. Catalyzes the phosphorylation of glycerol to yield sn-glycerol 3-phosphate. This is Glycerol kinase from Alteromonas mediterranea (strain DSM 17117 / CIP 110805 / LMG 28347 / Deep ecotype).